The chain runs to 460 residues: MTLRIFDTGTRTLRDFKPVQPGHASVYLCGATPQSSPHIGHVRSAVAFDILRRWLMAKGLDVAFVRNVTDIDDKILTKASENGRPWWEWVSTYEREFTWTYNTLGVLPPSTEPRATGHVTQMIKYMQRLIDNGFAYAVDGSVYFDVAAWSKAEGSDYGSLSGNRVEDMEQGEPDNFGKRGPQDFALWKAAKPGEPSWPTPWGDGRPGWHLECSAMATYYLGEQFDIHCGGLDLQFPHHENEIAQAHAAGDKFANYWMHNHWVTMAGEKMSKSLGNVLAVPEMLKQVRPVELRYYLGSAHYRSVLEYSESALSEAAVGYRRIESFLERVGDVEVGEWTPGFEVAMDEDIAVPKALAEIHNAVREGNAALDKGDREAAEKLASSVRAMTGVLGFDPVEWGSDAGADGKADKALDVLISSELERRATARAEKNWAVADEVRDRLADAGIEVVDTADGATWKLQ.

Cys29 contacts Zn(2+). Positions 31 to 41 match the 'HIGH' region motif; it reads ATPQSSPHIGH. Residues Cys212, His237, and Glu241 each coordinate Zn(2+). A 'KMSKS' region motif is present at residues 268 to 272; it reads KMSKS. Residue Lys271 coordinates ATP.

Belongs to the class-I aminoacyl-tRNA synthetase family. As to quaternary structure, monomer. Zn(2+) is required as a cofactor.

Its subcellular location is the cytoplasm. It carries out the reaction tRNA(Cys) + L-cysteine + ATP = L-cysteinyl-tRNA(Cys) + AMP + diphosphate. The chain is Cysteine--tRNA ligase from Corynebacterium glutamicum (strain ATCC 13032 / DSM 20300 / JCM 1318 / BCRC 11384 / CCUG 27702 / LMG 3730 / NBRC 12168 / NCIMB 10025 / NRRL B-2784 / 534).